The primary structure comprises 510 residues: Monocarboxylate transporter 14 (510 aa).

At 1 to 27 (MYTSHEDIGYDFEDGPKDKKTLKPHPN) the chain is on the cytoplasmic side. 6 helical membrane passes run 28–48 (IDGGWAWMMVLSSFFVHILIM), 74–94 (WVSSLSMGITLIVGPFIGLFI), 103–123 (AIIGGLVNSLGWVLSAYAANV), 127–147 (FITFGVAAGLGSGMAYLPAVV), 159–179 (LAQGLSTTGTGFGTFLMTVLL), and 191–209 (AMLIQGAVSLNLCVCGALM). The interval 214–255 (PGKNPNDPGEKDVRGLPAHSTESVKSTGQQGRTEEKDGGLGN) is disordered. The span at 233-244 (STESVKSTGQQG) shows a compositional bias: polar residues. Helical transmembrane passes span 315–335 (MFVAFIFWALFAYSSFVIPFI), 353–373 (FPLTSIIAIVHIFGKVILGVI), 379–399 (ISVWNVFLLANFTLVLSIFIL), 408–428 (LAVICALIGFSSGYFSLMPVV), 443–463 (GIIICANGISALLGPPFAGWI), and 474–494 (FYICGLLYMIGILFLLIQPCI). The Cytoplasmic segment spans residues 495 to 510 (RIIEQSRRKYMDGAHV).

It belongs to the major facilitator superfamily. Monocarboxylate porter (TC 2.A.1.13) family.

Its subcellular location is the cell membrane. In terms of biological role, proton-linked monocarboxylate transporter. May catalyze the transport of monocarboxylates across the plasma membrane. In Homo sapiens (Human), this protein is Monocarboxylate transporter 14 (SLC16A14).